Here is a 282-residue protein sequence, read N- to C-terminus: AB hydrolase superfamily protein FGSG_00045 (282 aa).

Positions 1-10 (MAPISSTRPS) are enriched in polar residues. Residues 1–22 (MAPISSTRPSHSIAADNPNPTT) are disordered. An AB hydrolase-1 domain is found at 22-270 (TQVNFNTNMT…FADMVKRWII (249 aa)).

This sequence belongs to the AB hydrolase superfamily.

Its pathway is mycotoxin biosynthesis. Its function is as follows. AB hydrolase superfamily protein; part of the gene cluster that mediates the biosynthesis of gramillins A and B, bicyclic lipopeptides that induce cell death in maize leaves but not in wheat leaves. The nonribosomal peptide synthetase GRA1 incorporates respectively a glutamic adic (Glu), a leucine (Leu), a serine (Ser), a hydroxyglutamine (HOGln), a 2-amino decanoic acid, and 2 cysteins (CysB and CysA). The biosynthesis of 2-amino decanoic acid incorporated in gramillins could be initiated by a fatty acid synthase composed of the alpha and beta subunits FGSG_00036 and FGSG_11656. The cytochrome P450 monooxygenase FGSG_15680 could hydroxylate the fatty acid chain. Subsequent oxidation to the ketone by the oxidoreductase FGSG_00048 and transamination by aminotransferase FGSG_00049 could form 2-amino-decanoic acid. On the other hand, FGSG_15680 could also be responsible for the HO-modified glutamine at the gamma-position. Whether hydroxylation occurs on the fully assembled product or on the Gln residue prior to assembly into the gramillins requires further proof. The thioredoxin FGSG_00043 could also be required for the disulfide-bond formation between CysA and CysB. The specific involvement of the remaining proteins from the cluster is more difficult to discern, but could have broader regulatory (FGSG_00040 and FGSG_11657) or enzymatic functions (FGSG_00044 and FGSG_00045). The final C-domain of GRA1 does not possess the expected sequence of a termination CT domain, often implicated in macrocyclization and release of a cyclopeptidein fungal NRPs; and the thioesterase FGSG_00047 may act in concert with the terminal C-domain of GRA1 to catalyze the formation of the macrocyclic anhydride and release of the products. In Gibberella zeae (strain ATCC MYA-4620 / CBS 123657 / FGSC 9075 / NRRL 31084 / PH-1) (Wheat head blight fungus), this protein is AB hydrolase superfamily protein FGSG_00045.